The following is a 490-amino-acid chain: 5'-3' exonuclease PLD3 (490 aa).

Over 1–38 (MKPKLMYQELKVPAEEPANELPMNEIEAWKAAEKKARW) the chain is Cytoplasmic. The chain crosses the membrane as a helical; Signal-anchor for type II membrane protein span at residues 39–59 (VLLVLILAVVGFGALMTQLFL). Topologically, residues 60–490 (WEYGDLHLFG…DSVGNACRLL (431 aa)) are lumenal. 2 disulfide bridges follow: Cys-77–Cys-239 and Cys-81–Cys-237. N-linked (GlcNAc...) asparagine glycans are attached at residues Asn-97 and Asn-132. Positions 196 to 223 (THGVLHTKFWVVDQTHFYLGSANMDWRS) constitute a PLD phosphodiesterase 1 domain. Active-site residues include His-201, Lys-203, and Asp-208. His-201 serves as the catalytic Proton donor. The phosphate site is built by His-201 and Lys-203. Asn-218 contributes to the phosphate binding site. 3 N-linked (GlcNAc...) asparagine glycosylation sites follow: Asn-236, Asn-284, and Asn-387. Cys-366 and Cys-487 form a disulfide bridge. The region spanning 411–437 (YARVNHNKYMVTERATYIGTSNWSGNY) is the PLD phosphodiesterase 2 domain. Residue His-416 participates in phosphate binding. His-416 acts as the Nucleophile in catalysis. Residue Phe-438 coordinates Mg(2+).

This sequence belongs to the phospholipase D family. Homodimer. Interacts with APP. Post-translationally, N-glycosylated. Proteolytically processed to a soluble form that is stable within endosomes and lysosomes. During transport through the secretory pathway becomes proteolysed by cysteine proteases, thereby releasing a stable soluble lysosomal lumenal polypeptide, whereas the transmembrane-bound fragment is rapidly degraded. Its transport route to lysosomes involves ubiquitination and the ESCRT complex. In terms of processing, ubiquitinated. Ubiquitination mediates sorting into lysosomes.

The protein resides in the endoplasmic reticulum membrane. Its subcellular location is the lysosome lumen. It is found in the early endosome membrane. It localises to the late endosome membrane. The protein localises to the golgi apparatus membrane. The protein resides in the endosome membrane. It carries out the reaction Exonucleolytic cleavage in the 5'- to 3'-direction to yield nucleoside 3'-phosphates.. The catalysed reaction is a 5'-end 5'-dephospho-ribonucleotidyl-ribonucleotide-RNA + H2O = a ribonucleoside 3'-phosphate + a 5'-end dephospho-ribonucleoside-RNA + H(+). It catalyses the reaction a ribonucleoside 3'-phosphate-2'-3'-cyclophospho-GMP + H2O = a ribonucleoside 3'-phosphate + 2',3'-cyclophospho-GMP + H(+). The enzyme catalyses a 5'-end 5'-dephospho-2'-deoxyribonucleotidyl-2'-deoxyribonucleotide in single-stranded DNA + H2O = a 5'-end dephospho-2'-deoxyribonucleoside in single-stranded DNA + a 2'-deoxyribonucleoside 3'-phosphate + H(+). It carries out the reaction a 5'-end 5'-phospho-2'-deoxyribonucleotide in single-stranded DNA + H2O = a 5'-end 5'-dephospho-2'-deoxyribonucleotide in single-stranded DNA + phosphate. The catalysed reaction is a 3-lyso-sn-glycero-1-phospho-(3'-acyl-1'-sn-glycerol) + a 1-acyl-sn-glycerol = a 3-acyl-sn-glycero-1-phospho-(3'-acyl-1'-sn-glycerol) + glycerol. It catalyses the reaction 3-lyso-sn-glycero-1-phospho-(3'-(9Z-octadecenoyl)-1'-sn-glycerol) + 1-(9Z-octadecenoyl)-sn-glycerol = 3-(9Z-octadecenoyl)-sn-glycero-1-phospho-(3'-(9Z-octadecenoyl)-1'-sn-glycerol) + glycerol. 5'-&gt;3' exonuclease that hydrolyzes the phosphodiester bond of single-stranded DNA (ssDNA) and RNA molecules to form nucleoside 3'-monophosphates and 5'-end 5'-hydroxy deoxyribonucleotide/ribonucleotide fragments. Partially redundant with PLD4, can cleave all four nucleotides displaying higher efficiency for ssDNA and RNA fragments initiated with uridine and guanosine residues and lower efficiency for cytidine-initiated substrates. As a result, it does not always degrade polynucleotides to the single nucleotide level, it can stall at specific sites sparing certain fragments from exonucleolytic degradation. Processes self and pathogenic ssDNA and RNA molecules that reach the endolysosomal compartment via phagocytosis or autophagy and may serve as 'danger' signals for recognition by innate immune receptors such as toll-like receptors (TLRs). Degrades mitochondrial CpG-rich ssDNA fragments to prevent TLR9 activation and autoinflammatory response, but it can cleave viral RNA to generate ligands for TLR7 activation and initiate antiviral immune responses. In plasmacytoid dendritic cells, it cooperates with endonuclease RNASET2 to release 2',3'-cyclic guanosine monophosphate (2',3'-cGMP), a potent stimulatory ligand for TLR7. Produces 2',3'-cGMPs and cytidine-rich RNA fragments that occupy TLR7 ligand-binding pockets and trigger a signaling-competent state. Can exert polynucleotide phosphatase activity toward 5'-phosphorylated ssDNA substrates although at a slow rate. Transphosphatidylase that catalyzes the exchange with R to S stereo-inversion of the glycerol moiety between (S,R)-lysophosphatidylglycerol (LPG) and monoacylglycerol (MAG) substrates to yield (S,S)-bis(monoacylglycero)phosphate (BMP). Can synthesize a variety of (S,S)-BMPs representing the main phospholipid constituent of lysosomal intralumenal vesicle (ILV) membranes that bind acid hydrolases for lipid degradation. Regulates the homeostasis and interorganellar communication of the endolysosomal system with an overall impact on cellular removal of dysfunctional organelles via autophagy as well as proper protein and lipid turnover. May play a role in myotube formation in response to ER stress. The protein is 5'-3' exonuclease PLD3 (PLD3) of Macaca fascicularis (Crab-eating macaque).